Consider the following 551-residue polypeptide: MQEFLLPVIKSALQSAAIETDKPVQIEKPTDKKNGDFSTNIALLLSKECRRNPRELAAELIGQMIFPDGTVERIEIAGPGFINFYLTPLFIMQSVEHILLEGKGYGSSCAGKGKTAIVEYVSANPTGPLTIGRGRGGVLGDCIANLLATQGYGLTREYYFNDAGRQMQILGESVRYRYMERCGRDIVFPESHYQGEYIREIAEILFLEHESSLIDSDNLSIFKDTAEAIIFSSIKKTLARIDIRHDSFFNEHTLYIAEGNGKSANDRVLELLESKGFIDRYDGATWFLTTKLGQEKDKVLVKSSGEPSYRLPDIAYHLDKYRRKFDLIVNVFGADHIDEYPDVLEALRILGHDTSKMRVAINQFVTTTVDGETVKMSTRKGNADLLDELIDDVGADATRLFFIMRSKDSHLNFDIELAKKQSKDNPVFYLQYAHARICSLLRIAAEEAGFKPDGSGAHLLQKLTLEPEIQLGFTLLDYPEVIRTAIRLLEPQKMVEYLHSVAEQYHKFYQECPILKADPDIRTARLFLSLATRQVLRNGFTILGISAPESM.

The 'HIGH' region signature appears at 123 to 133; sequence ANPTGPLTIGR.

This sequence belongs to the class-I aminoacyl-tRNA synthetase family. As to quaternary structure, monomer.

The protein resides in the cytoplasm. The catalysed reaction is tRNA(Arg) + L-arginine + ATP = L-arginyl-tRNA(Arg) + AMP + diphosphate. The chain is Arginine--tRNA ligase from Chlorobium limicola (strain DSM 245 / NBRC 103803 / 6330).